Here is a 642-residue protein sequence, read N- to C-terminus: DNA polymerase III subunit tau (642 aa).

Residue 45–52 participates in ATP binding; the sequence is GTRGVGKT. Residues Cys-64, Cys-73, Cys-76, and Cys-79 each coordinate Zn(2+). Positions 385–441 are disordered; sequence TPPQLQQPSAPAPQTSPAPLPASTSQVLAARNQLQRAQGVTKTKKSEPAAASRARPV. Residues 394–404 are compositionally biased toward pro residues; the sequence is APAPQTSPAPL. Over residues 416-425 the composition is skewed to polar residues; the sequence is NQLQRAQGVT.

The protein belongs to the DnaX/STICHEL family. The DNA polymerase holoenzyme is a complex that contains 10 different types of subunits. These subunits are organized into 3 functionally essential subassemblies: the pol III core, the beta sliding clamp processivity factor and the clamp-loading complex. The pol III core (subunits alpha, epsilon and theta) contains the polymerase and the 3'-5' exonuclease proofreading activities. The polymerase is tethered to the template via the sliding clamp processivity factor. The clamp-loading complex assembles the beta processivity factor onto the primer template and plays a central role in the organization and communication at the replication fork. This complex contains delta, delta', psi and chi, and copies of either or both of two different DnaX proteins, gamma and tau. The composition of the holoenzyme is, therefore: (alpha,epsilon,theta)[2]-(isoform:gamma/tau)[3]-delta,delta', psi,chi-beta[4].

It catalyses the reaction DNA(n) + a 2'-deoxyribonucleoside 5'-triphosphate = DNA(n+1) + diphosphate. Functionally, DNA polymerase III is a complex, multichain enzyme responsible for most of the replicative synthesis in bacteria. This DNA polymerase also exhibits 3' to 5' exonuclease activity. In terms of biological role, serves as a scaffold to help in the dimerization of the core complex. Seems to interact with the delta subunit to transfer the beta subunit on the DNA. The sequence is that of DNA polymerase III subunit tau (dnaX) from Salmonella typhimurium (strain LT2 / SGSC1412 / ATCC 700720).